A 292-amino-acid polypeptide reads, in one-letter code: Ribosomal RNA small subunit methyltransferase I (292 aa).

The protein belongs to the methyltransferase superfamily. RsmI family.

The protein localises to the cytoplasm. It catalyses the reaction cytidine(1402) in 16S rRNA + S-adenosyl-L-methionine = 2'-O-methylcytidine(1402) in 16S rRNA + S-adenosyl-L-homocysteine + H(+). Functionally, catalyzes the 2'-O-methylation of the ribose of cytidine 1402 (C1402) in 16S rRNA. The protein is Ribosomal RNA small subunit methyltransferase I of Buchnera aphidicola subsp. Baizongia pistaciae (strain Bp).